The primary structure comprises 152 residues: 3-hydroxyacyl-[acyl-carrier-protein] dehydratase FabZ (152 aa).

Residue His57 is part of the active site.

It belongs to the thioester dehydratase family. FabZ subfamily.

Its subcellular location is the cytoplasm. It carries out the reaction a (3R)-hydroxyacyl-[ACP] = a (2E)-enoyl-[ACP] + H2O. Its function is as follows. Involved in unsaturated fatty acids biosynthesis. Catalyzes the dehydration of short chain beta-hydroxyacyl-ACPs and long chain saturated and unsaturated beta-hydroxyacyl-ACPs. This Bradyrhizobium sp. (strain ORS 278) protein is 3-hydroxyacyl-[acyl-carrier-protein] dehydratase FabZ.